A 366-amino-acid polypeptide reads, in one-letter code: UDP-N-acetylenolpyruvoylglucosamine reductase (366 aa).

One can recognise an FAD-binding PCMH-type domain in the interval 29-203; sequence VGPVARTLVT…LEVEFALDAS (175 aa). The active site involves arginine 177. Catalysis depends on serine 258, which acts as the Proton donor. Glutamate 358 is an active-site residue.

Belongs to the MurB family. It depends on FAD as a cofactor.

It localises to the cytoplasm. The catalysed reaction is UDP-N-acetyl-alpha-D-muramate + NADP(+) = UDP-N-acetyl-3-O-(1-carboxyvinyl)-alpha-D-glucosamine + NADPH + H(+). The protein operates within cell wall biogenesis; peptidoglycan biosynthesis. In terms of biological role, cell wall formation. The sequence is that of UDP-N-acetylenolpyruvoylglucosamine reductase from Mycobacterium ulcerans (strain Agy99).